A 460-amino-acid chain; its full sequence is DEAD-box helicase Dbp80 (460 aa).

A Phosphoserine modification is found at Ser-26. Thr-30 is modified (phosphothreonine). The Q motif motif lies at 73–101; that stretch reads KTFEALHLKASLLKGIYAMGFNTPSKIQE. The 171-residue stretch at 106–276 folds into the Helicase ATP-binding domain; that stretch reads TLLADPPQNM…RLIVADPTII (171 aa). Residue 119–126 coordinates ATP; that stretch reads SQSGTGKT. The DEAD box motif lies at 223–226; it reads DEAD. Positions 287–455 constitute a Helicase C-terminal domain; the sequence is NIKQYYVKCK…VLNTDSADDI (169 aa).

Belongs to the DEAD box helicase family. DDX19/DBP5 subfamily.

It is found in the cytoplasm. It localises to the nucleus. Its subcellular location is the nucleoplasm. It catalyses the reaction ATP + H2O = ADP + phosphate + H(+). In terms of biological role, ATP-dependent RNA helicase involved in mRNA export from the nucleus. This chain is DEAD-box helicase Dbp80 (Dbp80), found in Drosophila melanogaster (Fruit fly).